The chain runs to 78 residues: Large ribosomal subunit protein bL28 (78 aa).

The interval 1–24 (MSKVCQVTGKRPASGNNVSHAHNK) is disordered.

The protein belongs to the bacterial ribosomal protein bL28 family.

This is Large ribosomal subunit protein bL28 from Nitrosococcus oceani (strain ATCC 19707 / BCRC 17464 / JCM 30415 / NCIMB 11848 / C-107).